Reading from the N-terminus, the 246-residue chain is uncharacterized protein (246 aa).

A signal peptide spans 1–24; the sequence is MGAPLRHCLLVAAALSLGCGVAAA. 2 consecutive transmembrane segments (helical) span residues 71 to 91 and 104 to 124; these read YYLG…IGLV and FTCA…AGGA.

It is found in the cell membrane. This is an uncharacterized protein from Mycobacterium tuberculosis (strain ATCC 25618 / H37Rv).